The sequence spans 610 residues: Elongation factor 4 (610 aa).

The tr-type G domain occupies 11–193 (EKIRNFSIIA…QIVEKVPAPT (183 aa)). Residues 23–28 (DHGKST) and 140–143 (NKID) contribute to the GTP site.

The protein belongs to the TRAFAC class translation factor GTPase superfamily. Classic translation factor GTPase family. LepA subfamily.

It localises to the cell membrane. It catalyses the reaction GTP + H2O = GDP + phosphate + H(+). Required for accurate and efficient protein synthesis under certain stress conditions. May act as a fidelity factor of the translation reaction, by catalyzing a one-codon backward translocation of tRNAs on improperly translocated ribosomes. Back-translocation proceeds from a post-translocation (POST) complex to a pre-translocation (PRE) complex, thus giving elongation factor G a second chance to translocate the tRNAs correctly. Binds to ribosomes in a GTP-dependent manner. The protein is Elongation factor 4 of Streptococcus suis (strain 98HAH33).